The chain runs to 294 residues: Maltose/maltodextrin import ATP-binding protein MalK (294 aa).

The region spanning 4-233 is the ABC transporter domain; it reads VQLRNVTKAW…PADRFVAGFI (230 aa). Residue 36–43 coordinates ATP; it reads GPSGCGKS.

The protein belongs to the ABC transporter superfamily. Maltooligosaccharide importer (TC 3.A.1.1.1) family. As to quaternary structure, the complex is composed of two ATP-binding proteins (MalK), two transmembrane proteins (MalG and MalK) and a solute-binding protein (MalE).

The protein resides in the cell inner membrane. The enzyme catalyses D-maltose(out) + ATP + H2O = D-maltose(in) + ADP + phosphate + H(+). Part of the ABC transporter complex MalEFGK involved in maltose/maltodextrin import. Responsible for energy coupling to the transport system. This Klebsiella aerogenes (Enterobacter aerogenes) protein is Maltose/maltodextrin import ATP-binding protein MalK.